We begin with the raw amino-acid sequence, 689 residues long: Beta-galactosidase BbgII (689 aa).

Arg122 and Asn160 together coordinate substrate. Glu161 serves as the catalytic Proton donor. The active-site Nucleophile is the Glu320. Substrate contacts are provided by residues Trp328 and 368–371 (EKWH).

Belongs to the glycosyl hydrolase 42 family.

It catalyses the reaction Hydrolysis of terminal non-reducing beta-D-galactose residues in beta-D-galactosides.. The protein is Beta-galactosidase BbgII of Bifidobacterium bifidum (strain DSM 20082 / JCM 1254 / BCRC 11844 / KCTC 3440 / E319f (Variant a)).